A 484-amino-acid chain; its full sequence is Sperm motility kinase Tcr mutant form (484 aa).

The 249-residue stretch at 8 to 256 (YEMLETIGQG…VAEVMVHPWV (249 aa)) folds into the Protein kinase domain. ATP is bound by residues 14 to 22 (IGQGGCAQV) and K37. Residue D127 is the Proton acceptor of the active site. 2 disordered regions span residues 355-400 (EPTG…TMDQ) and 426-446 (STEG…RGWP). Polar residues predominate over residues 391–400 (PINTTPTMDQ).

This sequence belongs to the protein kinase superfamily. Tyr protein kinase family. Smok subfamily. Testis-specific. Expressed in the testis from 22 days postpartum (22 dpp). Expressed late in spermiogenesis, only in Tcr-containing t-haplotypes.

The catalysed reaction is L-seryl-[protein] + ATP = O-phospho-L-seryl-[protein] + ADP + H(+). It carries out the reaction L-threonyl-[protein] + ATP = O-phospho-L-threonyl-[protein] + ADP + H(+). While the main function of Smoks is to control sperm motility, the role of Smok-Tcr, with reduced kinase activity, is to counterbalance a signaling impairment caused by the distorter/sterility loci, giving t-sperm an advantage in reaching the oocytes. Transmission ratio distortion also called segregation distortion is the name given to the phenomenon above-mentioned. Being associated with the T-complex, it allows males heterozygous for a complete t-haplotype to preferentially transmit the t-haplotype chromosome. In Mus musculus (Mouse), this protein is Sperm motility kinase Tcr mutant form (Smoktcr).